A 352-amino-acid chain; its full sequence is Extracellular minor metalloprotease (352 aa).

Disordered regions lie at residues 41–86 and 144–164; these read GNKP…QPRR and TARS…ELTH. The segment covering 48–57 has biased composition (basic and acidic residues); that stretch reads PTEKNARAGE. Composition is skewed to low complexity over residues 71–85 and 144–156; these read ARQT…QQPR and TARS…SPST. Position 160 (H160) interacts with Zn(2+). The active site involves E161. Positions 164 and 184 each coordinate Zn(2+). H262 acts as the Proton donor in catalysis. Residues 303 to 325 are disordered; it reads TPTSDHLRPRHGETRAGLRTKRG. A compositionally biased stretch (basic and acidic residues) spans 304-325; sequence PTSDHLRPRHGETRAGLRTKRG.

Belongs to the peptidase M4 family. The cofactor is Zn(2+).

It localises to the secreted. The protein is Extracellular minor metalloprotease (smp) of Serratia marcescens (strain ATCC 21074 / E-15).